We begin with the raw amino-acid sequence, 475 residues long: Ribulose bisphosphate carboxylase large chain (475 aa).

A propeptide spanning residues M1–S2 is cleaved from the precursor. At P3 the chain carries N-acetylproline. K14 is modified (N6,N6,N6-trimethyllysine). Substrate is bound by residues N123 and T173. K175 functions as the Proton acceptor in the catalytic mechanism. Residue K177 coordinates substrate. Mg(2+) contacts are provided by K201, D203, and E204. K201 carries the post-translational modification N6-carboxylysine. H294 (proton acceptor) is an active-site residue. Substrate-binding residues include H327 and S379.

The protein belongs to the RuBisCO large chain family. Type I subfamily. As to quaternary structure, heterohexadecamer of 8 large chains and 8 small chains; disulfide-linked. The disulfide link is formed within the large subunit homodimers. It depends on Mg(2+) as a cofactor. Post-translationally, the disulfide bond which can form in the large chain dimeric partners within the hexadecamer appears to be associated with oxidative stress and protein turnover.

It localises to the plastid. It is found in the chloroplast. It catalyses the reaction 2 (2R)-3-phosphoglycerate + 2 H(+) = D-ribulose 1,5-bisphosphate + CO2 + H2O. The enzyme catalyses D-ribulose 1,5-bisphosphate + O2 = 2-phosphoglycolate + (2R)-3-phosphoglycerate + 2 H(+). RuBisCO catalyzes two reactions: the carboxylation of D-ribulose 1,5-bisphosphate, the primary event in carbon dioxide fixation, as well as the oxidative fragmentation of the pentose substrate in the photorespiration process. Both reactions occur simultaneously and in competition at the same active site. This chain is Ribulose bisphosphate carboxylase large chain, found in Amaranthus hypochondriacus (Prince-of-Wales feather).